A 327-amino-acid chain; its full sequence is Methionine import ATP-binding protein MetN (327 aa).

In terms of domain architecture, ABC transporter spans valine 3 to leucine 239. Glycine 36 to serine 43 provides a ligand contact to ATP.

The protein belongs to the ABC transporter superfamily. Methionine importer (TC 3.A.1.24) family. The complex is composed of two ATP-binding proteins (MetN), two transmembrane proteins (MetI) and a solute-binding protein (MetQ).

It localises to the cell inner membrane. It catalyses the reaction L-methionine(out) + ATP + H2O = L-methionine(in) + ADP + phosphate + H(+). The catalysed reaction is D-methionine(out) + ATP + H2O = D-methionine(in) + ADP + phosphate + H(+). Part of the ABC transporter complex MetNIQ involved in methionine import. Responsible for energy coupling to the transport system. This is Methionine import ATP-binding protein MetN from Helicobacter pylori (strain ATCC 700392 / 26695) (Campylobacter pylori).